Here is a 417-residue protein sequence, read N- to C-terminus: D-amino acid dehydrogenase (417 aa).

3–17 (VIVIGSGVIGLTSAW) serves as a coordination point for FAD.

The protein belongs to the DadA oxidoreductase family. The cofactor is FAD.

It catalyses the reaction a D-alpha-amino acid + A + H2O = a 2-oxocarboxylate + AH2 + NH4(+). It functions in the pathway amino-acid degradation; D-alanine degradation; NH(3) and pyruvate from D-alanine: step 1/1. Oxidative deamination of D-amino acids. This Vibrio atlanticus (strain LGP32) (Vibrio splendidus (strain Mel32)) protein is D-amino acid dehydrogenase.